Here is a 577-residue protein sequence, read N- to C-terminus: Anthranilate synthase alpha subunit 1, chloroplastic (577 aa).

A chloroplast-targeting transit peptide spans 1–34; it reads MASLVLSLRIAPSTPPLGLGGGRFRGRRGAVACR.

The protein belongs to the anthranilate synthase component I family. As to quaternary structure, heterotetramer consisting of two non-identical subunits: a beta subunit and a large alpha subunit.

The protein resides in the plastid. It localises to the chloroplast. The catalysed reaction is chorismate + L-glutamine = anthranilate + pyruvate + L-glutamate + H(+). It functions in the pathway amino-acid biosynthesis; L-tryptophan biosynthesis; L-tryptophan from chorismate: step 1/5. With respect to regulation, feedback inhibition by tryptophan. Its function is as follows. Part of a heterotetrameric complex that catalyzes the two-step biosynthesis of anthranilate, an intermediate in the biosynthesis of L-tryptophan. In the first step, the glutamine-binding beta subunit of anthranilate synthase (AS) provides the glutamine amidotransferase activity which generates ammonia as a substrate that, along with chorismate, is used in the second step, catalyzed by the large alpha subunit of AS to produce anthranilate. The chain is Anthranilate synthase alpha subunit 1, chloroplastic (ASA1) from Oryza sativa subsp. indica (Rice).